The following is a 465-amino-acid chain: MSEKETNTTSTENKEKEKQEQTNTNSTTESTNNQVDEEYERPGRSEGLDEFGIQLDIQQSDPNSPLYSVKTFEELGLKPELLKGVYAMGYNKPSKIQEAALPIIIQSPNNLIAQSQSGTGKTAAFTLGMLNCVDPSINAPQAICISPTKELALQTFEVISKIGQFSNIKPLLYISEIEVPKNVTNQVIIGTPGKILENVIKKQLSVKFLKMVVLDEADFIVKMKNVPNQIAMINRLLPSNVKVCLFSATFSMGVEELIKKIVQDPYTSIRLKRQELSVEKIHQYFIDCGSEDNKALILSDIYGFISVGQSIVFVHTIATAKSVHQKMVDEGHSVSLLYGKDLTTEERFKQIKDFKDGKSKVLITTNVLARGIDIPQVSLVINYDVPLDEMGKPDPVHYLHRIGRVGRFGRSGVALSFVYDQQSTNKLMNISTHLGVPLKELKSSEIESLDGILKGIRNQLTPLNN.

Positions 1–20 are enriched in basic and acidic residues; it reads MSEKETNTTSTENKEKEKQE. The segment at 1–45 is disordered; it reads MSEKETNTTSTENKEKEKQEQTNTNSTTESTNNQVDEEYERPGRS. Residues 21–34 are compositionally biased toward low complexity; sequence QTNTNSTTESTNNQ. Residues 70-98 carry the Q motif motif; the sequence is KTFEELGLKPELLKGVYAMGYNKPSKIQE. A Helicase ATP-binding domain is found at 102 to 268; the sequence is PIIIQSPNNL…KKIVQDPYTS (167 aa). Position 115-122 (115-122) interacts with ATP; the sequence is SQSGTGKT. The short motif at 215-218 is the DEAD box element; it reads DEAD. Positions 297-449 constitute a Helicase C-terminal domain; sequence ILSDIYGFIS…ELKSSEIESL (153 aa).

The protein belongs to the DEAD box helicase family. DDX19/DBP5 subfamily.

It catalyses the reaction ATP + H2O = ADP + phosphate + H(+). In terms of biological role, ATP-binding RNA helicase required for normal differentiation and development. This chain is ATP-dependent RNA helicase ddx19 (helC), found in Dictyostelium discoideum (Social amoeba).